The primary structure comprises 603 residues: Probable methyltransferase-like protein 25 (603 aa).

The segment at 326–352 (TSSQQIPNRETSEANKERRKMTSKSSE) is disordered.

In terms of biological role, probable methyltransferase. The protein is Probable methyltransferase-like protein 25 (METTL25) of Homo sapiens (Human).